A 552-amino-acid polypeptide reads, in one-letter code: Keratin, type II cytoskeletal 6A (552 aa).

Over residues methionine 1 to arginine 14 the composition is skewed to polar residues. Residues methionine 1–alanine 21 are disordered. The interval methionine 1 to glutamate 151 is head. The tract at residues glutamate 152–leucine 187 is coil 1A. The 314-residue stretch at glutamate 152 to leucine 465 folds into the IF rod domain. The linker 1 stretch occupies residues glutamine 188–tyrosine 206. A coil 1B region spans residues isoleucine 207–methionine 298. Residues glutamine 299–isoleucine 322 form a linker 12 region. The coil 2 stretch occupies residues isoleucine 323–glutamate 461. The tract at residues glutamate 462–proline 552 is tail. The segment at isoleucine 524–proline 552 is disordered. Low complexity predominate over residues serine 525–proline 552.

The protein belongs to the intermediate filament family. Heterodimer of a type I and a type II keratin. KRT6 isomers associate with KRT16 and/or KRT17. Interacts with TCHP.

In terms of biological role, epidermis-specific type I keratin involved in wound healing. Involved in the activation of follicular keratinocytes after wounding, while it does not play a major role in keratinocyte proliferation or migration. Participates in the regulation of epithelial migration by inhibiting the activity of SRC during wound repair. The sequence is that of Keratin, type II cytoskeletal 6A (Krt6a) from Rattus norvegicus (Rat).